Here is a 714-residue protein sequence, read N- to C-terminus: Hormonally up-regulated neu tumor-associated kinase (714 aa).

Over residues 1 to 15 (MPAAAGDGLLGEPAA) the composition is skewed to low complexity. Residues 1–26 (MPAAAGDGLLGEPAAPGGGGGAEDAA) form a disordered region. Residues 62-320 (LIGSRKLGEG…IQQALANRWL (259 aa)) enclose the Protein kinase domain. ATP is bound by residues 68–76 (LGEGSFAKV) and Lys-91. Catalysis depends on Asp-186, which acts as the Proton acceptor. Residues 437–461 (KKPKEQEKRGDFLHRPFSKKLDKNL) show a composition bias toward basic and acidic residues. Disordered regions lie at residues 437–471 (KKPK…SGSL), 518–552 (MEFI…HKED), and 590–615 (ARRN…HTPL). The segment covering 599–611 (LSPGLPSGSMSPL) has biased composition (low complexity).

This sequence belongs to the protein kinase superfamily. CAMK Ser/Thr protein kinase family. SNF1 subfamily.

It carries out the reaction L-seryl-[protein] + ATP = O-phospho-L-seryl-[protein] + ADP + H(+). It catalyses the reaction L-threonyl-[protein] + ATP = O-phospho-L-threonyl-[protein] + ADP + H(+). The chain is Hormonally up-regulated neu tumor-associated kinase (HUNK) from Homo sapiens (Human).